The primary structure comprises 324 residues: 26S proteasome non-ATPase regulatory subunit 7 (324 aa).

The MPN domain occupies 9-144 (VVVHPLVLLS…TEAYISVEEV (136 aa)). Lys-180 is covalently cross-linked (Glycyl lysine isopeptide (Lys-Gly) (interchain with G-Cter in ubiquitin)). Lys-204, Lys-214, Lys-316, and Lys-317 each carry N6-acetyllysine. Residues 281-324 (ANRDAEKKEGQEKEESKKDRKEDKEKDKDKEKSDVKKEEKKEKK) are disordered.

The protein belongs to the peptidase M67A family. Component of the 19S proteasome regulatory particle complex. The 26S proteasome consists of a 20S core particle (CP) and two 19S regulatory subunits (RP). The regulatory particle is made of a lid composed of 9 subunits including PSMD7, a base containing 6 ATPases and few additional components. Within the complex, PSMD7 interacts with subunit PSMD4 through their respective MPN domain. Interacts with TRIM5.

Functionally, component of the 26S proteasome, a multiprotein complex involved in the ATP-dependent degradation of ubiquitinated proteins. This complex plays a key role in the maintenance of protein homeostasis by removing misfolded or damaged proteins, which could impair cellular functions, and by removing proteins whose functions are no longer required. Therefore, the proteasome participates in numerous cellular processes, including cell cycle progression, apoptosis, or DNA damage repair. The chain is 26S proteasome non-ATPase regulatory subunit 7 (PSMD7) from Homo sapiens (Human).